Here is a 714-residue protein sequence, read N- to C-terminus: Putative glutamine--fructose-6-phosphate aminotransferase [isomerizing] (714 aa).

Residue C2 is the Nucleophile; for GATase activity of the active site. Positions 2–321 (CGIFGYCNFL…DNDIAHIYDG (320 aa)) constitute a Glutamine amidotransferase type-2 domain. Residues 266 to 280 (STTSTFNHGSSTETP) show a composition bias toward polar residues. The disordered stretch occupies residues 266-285 (STTSTFNHGSSTETPAENGL). 2 consecutive SIS domains span residues 387-526 (WLTE…DLVS) and 559-704 (CDKK…VDLP).

The catalysed reaction is D-fructose 6-phosphate + L-glutamine = D-glucosamine 6-phosphate + L-glutamate. The protein operates within nucleotide-sugar biosynthesis; UDP-N-acetyl-alpha-D-glucosamine biosynthesis; alpha-D-glucosamine 6-phosphate from D-fructose 6-phosphate: step 1/1. In terms of biological role, involved in amino sugar synthesis (formation of chitin, supplies the amino sugars of asparagine-linked oligosaccharides of glycoproteins). The chain is Putative glutamine--fructose-6-phosphate aminotransferase [isomerizing] from Saccharomyces cerevisiae (strain YJM789) (Baker's yeast).